Here is a 119-residue protein sequence, read N- to C-terminus: UPF0231 protein ECA3777 (119 aa).

Belongs to the UPF0231 family.

This Pectobacterium atrosepticum (strain SCRI 1043 / ATCC BAA-672) (Erwinia carotovora subsp. atroseptica) protein is UPF0231 protein ECA3777.